Here is a 156-residue protein sequence, read N- to C-terminus: Protein CURVATURE THYLAKOID 1C, chloroplastic (156 aa).

The transit peptide at 1–55 (MASISATLPSPLLLTQRKSNLTSIQKLPFSLTRGTNDLSPLSLTRNPSSISLMVK) directs the protein to the chloroplast. The Stromal segment spans residues 56–83 (ASGESSDSSTDLDVVSTIQNVWDKSEDR). A helical membrane pass occupies residues 84-104 (LGLIGLGFAGIVALWASLNLI). The Lumenal segment spans residues 105–109 (TAIDK). A helical membrane pass occupies residues 110–130 (LPVISSGFELVGILFSTWFTY). The Stromal portion of the chain corresponds to 131-156 (RYLLFKPDRQELSKIVKKSVADILGQ).

The protein belongs to the CURT family. In terms of assembly, homo- and heterodimers and trimers. Interacts with PSAD2.

The protein localises to the plastid. It localises to the chloroplast thylakoid membrane. In terms of biological role, determines thylakoid architecture by inducing membrane curvature. The sequence is that of Protein CURVATURE THYLAKOID 1C, chloroplastic (CURT1C) from Arabidopsis thaliana (Mouse-ear cress).